The primary structure comprises 145 residues: Transcriptional regulator MraZ (145 aa).

SpoVT-AbrB domains follow at residues 7–54 and 83–126; these read NATN…GPDL and GVFM…QPQA.

The protein belongs to the MraZ family. As to quaternary structure, forms oligomers.

It is found in the cytoplasm. Its subcellular location is the nucleoid. This is Transcriptional regulator MraZ from Rhizobium johnstonii (strain DSM 114642 / LMG 32736 / 3841) (Rhizobium leguminosarum bv. viciae).